Reading from the N-terminus, the 420-residue chain is 2,3-dimethylmalate dehydratase large subunit (420 aa).

3 residues coordinate [4Fe-4S] cluster: C301, C361, and C364.

Belongs to the aconitase/IPM isomerase family. LeuC type 2 subfamily. As to quaternary structure, heterodimer of a large and a small subunit. The cofactor is [4Fe-4S] cluster.

It carries out the reaction (2R,3S)-2,3-dimethylmalate = dimethylmaleate + H2O. Its pathway is cofactor degradation; nicotinate degradation; propanoate and pyruvate from 6-hydroxynicotinate: step 7/8. The protein is 2,3-dimethylmalate dehydratase large subunit (dmdA) of Eubacterium barkeri (Clostridium barkeri).